The sequence spans 515 residues: Zinc-binding protein AdcA (515 aa).

An N-terminal signal peptide occupies residues 1 to 28 (MKKKILLMMSLISVFFAWQLTQAKQVLA). H66 lines the Zn(2+) pocket. The interval 125–148 (DHHHEDADKKHEHNKHSEEGHNHA) is disordered. The segment at 129–148 (EDADKKHEHNKHSEEGHNHA) is his-rich loop. Residues H152, H216, and E291 each contribute to the Zn(2+) site.

The protein belongs to the bacterial solute-binding protein 9 family.

Its function is as follows. Part of the ATP-binding cassette (ABC) transport system AdcABC involved in zinc import. Binds zinc with high affinity and specificity and delivers it to the membrane permease for translocation into the cytoplasm. The chain is Zinc-binding protein AdcA (adcA) from Streptococcus pyogenes serotype M1.